The sequence spans 207 residues: Pyridoxal 5'-phosphate synthase subunit PdxT (207 aa).

51 to 53 (GES) contributes to the L-glutamine binding site. Cysteine 83 (nucleophile) is an active-site residue. Residues arginine 112 and 143-144 (IR) contribute to the L-glutamine site. Active-site charge relay system residues include histidine 184 and glutamate 186.

It belongs to the glutaminase PdxT/SNO family. In terms of assembly, in the presence of PdxS, forms a dodecamer of heterodimers. Only shows activity in the heterodimer.

It carries out the reaction aldehydo-D-ribose 5-phosphate + D-glyceraldehyde 3-phosphate + L-glutamine = pyridoxal 5'-phosphate + L-glutamate + phosphate + 3 H2O + H(+). The enzyme catalyses L-glutamine + H2O = L-glutamate + NH4(+). Its pathway is cofactor biosynthesis; pyridoxal 5'-phosphate biosynthesis. Catalyzes the hydrolysis of glutamine to glutamate and ammonia as part of the biosynthesis of pyridoxal 5'-phosphate. The resulting ammonia molecule is channeled to the active site of PdxS. The sequence is that of Pyridoxal 5'-phosphate synthase subunit PdxT from Kineococcus radiotolerans (strain ATCC BAA-149 / DSM 14245 / SRS30216).